We begin with the raw amino-acid sequence, 175 residues long: Translation initiation factor IF-3 (175 aa).

The protein belongs to the IF-3 family. As to quaternary structure, monomer.

Its subcellular location is the cytoplasm. IF-3 binds to the 30S ribosomal subunit and shifts the equilibrium between 70S ribosomes and their 50S and 30S subunits in favor of the free subunits, thus enhancing the availability of 30S subunits on which protein synthesis initiation begins. This is Translation initiation factor IF-3 from Chlamydia trachomatis serovar D (strain ATCC VR-885 / DSM 19411 / UW-3/Cx).